The following is a 155-amino-acid chain: Phosphoprotein pp24 (155 aa).

A disordered region spans residues 1-50 (MEFEAEHEGLTASWVAPAPQGGKGAEGRAGVADEAGHGKTEAECAEDGEK). Over residues 34–50 (EAGHGKTEAECAEDGEK) the composition is skewed to basic and acidic residues. Positions 76–107 (RKRIEAKYMDLLVEAERENKNLRKKYNIILDV) form a coiled coil.

In Gallus gallus (Chicken), this protein is Phosphoprotein pp24 (MDV008).